A 129-amino-acid polypeptide reads, in one-letter code: Small ribosomal subunit protein uS11 (129 aa).

This sequence belongs to the universal ribosomal protein uS11 family. As to quaternary structure, part of the 30S ribosomal subunit. Interacts with proteins S7 and S18. Binds to IF-3.

Functionally, located on the platform of the 30S subunit, it bridges several disparate RNA helices of the 16S rRNA. Forms part of the Shine-Dalgarno cleft in the 70S ribosome. The protein is Small ribosomal subunit protein uS11 of Haemophilus influenzae (strain ATCC 51907 / DSM 11121 / KW20 / Rd).